Consider the following 77-residue polypeptide: DNA-directed RNA polymerase subunit epsilon (77 aa).

This sequence belongs to the RNA polymerase subunit epsilon family. RNAP is composed of a core of 2 alpha, a beta and a beta' subunit. The core is associated with a delta subunit, and at least one of epsilon or omega. When a sigma factor is associated with the core the holoenzyme is formed, which can initiate transcription.

The enzyme catalyses RNA(n) + a ribonucleoside 5'-triphosphate = RNA(n+1) + diphosphate. In terms of biological role, a non-essential component of RNA polymerase (RNAP). The chain is DNA-directed RNA polymerase subunit epsilon from Streptococcus pneumoniae serotype 2 (strain D39 / NCTC 7466).